The following is a 134-amino-acid chain: Profilin-3 (134 aa).

A disulfide bridge links Cys-13 with Cys-118. Residues 84 to 100 carry the Involved in PIP2 interaction motif; the sequence is AVIRGKKGSGGITIKKT. Thr-114 is modified (phosphothreonine).

This sequence belongs to the profilin family. Occurs in many kinds of cells as a complex with monomeric actin in a 1:1 ratio. Post-translationally, phosphorylated by MAP kinases.

It localises to the cytoplasm. The protein resides in the cytoskeleton. In terms of biological role, binds to actin and affects the structure of the cytoskeleton. At high concentrations, profilin prevents the polymerization of actin, whereas it enhances it at low concentrations. This is Profilin-3 from Olea europaea (Common olive).